Reading from the N-terminus, the 185-residue chain is Ribosome-recycling factor (185 aa).

This sequence belongs to the RRF family.

The protein resides in the cytoplasm. Responsible for the release of ribosomes from messenger RNA at the termination of protein biosynthesis. May increase the efficiency of translation by recycling ribosomes from one round of translation to another. The sequence is that of Ribosome-recycling factor from Neisseria gonorrhoeae (strain ATCC 700825 / FA 1090).